The primary structure comprises 101 residues: Small ribosomal subunit protein uS14c (101 aa).

It belongs to the universal ribosomal protein uS14 family. In terms of assembly, part of the 30S ribosomal subunit.

Its subcellular location is the plastid. Its function is as follows. Binds 16S rRNA, required for the assembly of 30S particles. The polypeptide is Small ribosomal subunit protein uS14c (Helicosporidium sp. subsp. Simulium jonesii (Green alga)).